A 443-amino-acid chain; its full sequence is ATP-dependent protease ATPase subunit HslU (443 aa).

ATP contacts are provided by residues isoleucine 18, 60–65 (GVGKTE), aspartate 256, glutamate 321, and arginine 393.

The protein belongs to the ClpX chaperone family. HslU subfamily. A double ring-shaped homohexamer of HslV is capped on each side by a ring-shaped HslU homohexamer. The assembly of the HslU/HslV complex is dependent on binding of ATP.

It localises to the cytoplasm. Its function is as follows. ATPase subunit of a proteasome-like degradation complex; this subunit has chaperone activity. The binding of ATP and its subsequent hydrolysis by HslU are essential for unfolding of protein substrates subsequently hydrolyzed by HslV. HslU recognizes the N-terminal part of its protein substrates and unfolds these before they are guided to HslV for hydrolysis. This chain is ATP-dependent protease ATPase subunit HslU, found in Buchnera aphidicola subsp. Acyrthosiphon pisum (strain 5A).